The following is an 88-amino-acid chain: Long neurotoxin LNTX-1 (88 aa).

A signal peptide spans 1-21; sequence MKTLLLTLVVVTIVCLDFGYA. Cystine bridges form between cysteine 24–cysteine 42, cysteine 35–cysteine 63, cysteine 48–cysteine 52, cysteine 67–cysteine 78, and cysteine 79–cysteine 84.

Belongs to the three-finger toxin family. Long-chain subfamily. Type II alpha-neurotoxin sub-subfamily. Expressed by the venom gland.

It localises to the secreted. In terms of biological role, binds with high affinity to muscular (alpha-1/CHRNA1) and neuronal (alpha-7/CHRNA7) nicotinic acetylcholine receptor (nAChR) and inhibits acetylcholine from binding to the receptor, thereby impairing neuromuscular and neuronal transmission. The protein is Long neurotoxin LNTX-1 of Demansia vestigiata (Lesser black whip snake).